The following is a 293-amino-acid chain: Undecaprenyl-diphosphatase (293 aa).

Helical transmembrane passes span P57 to F77, L106 to W126, I134 to A154, G172 to S192, F212 to A232, V239 to W259, and S268 to L288.

Belongs to the UppP family.

The protein localises to the cell inner membrane. It carries out the reaction di-trans,octa-cis-undecaprenyl diphosphate + H2O = di-trans,octa-cis-undecaprenyl phosphate + phosphate + H(+). Catalyzes the dephosphorylation of undecaprenyl diphosphate (UPP). Confers resistance to bacitracin. The polypeptide is Undecaprenyl-diphosphatase (Prochlorococcus marinus (strain MIT 9303)).